The chain runs to 263 residues: tRNA1(Val) (adenine(37)-N6)-methyltransferase (263 aa).

Belongs to the methyltransferase superfamily. tRNA (adenine-N(6)-)-methyltransferase family.

The protein resides in the cytoplasm. It catalyses the reaction adenosine(37) in tRNA1(Val) + S-adenosyl-L-methionine = N(6)-methyladenosine(37) in tRNA1(Val) + S-adenosyl-L-homocysteine + H(+). Its function is as follows. Specifically methylates the adenine in position 37 of tRNA(1)(Val) (anticodon cmo5UAC). This is tRNA1(Val) (adenine(37)-N6)-methyltransferase from Pseudoalteromonas atlantica (strain T6c / ATCC BAA-1087).